The chain runs to 211 residues: Outer-membrane lipoprotein carrier protein (211 aa).

An N-terminal signal peptide occupies residues 1–24; sequence MRNRILVSACAALAMFAMQAPAHA.

Belongs to the LolA family. In terms of assembly, monomer.

The protein resides in the periplasm. In terms of biological role, participates in the translocation of lipoproteins from the inner membrane to the outer membrane. Only forms a complex with a lipoprotein if the residue after the N-terminal Cys is not an aspartate (The Asp acts as a targeting signal to indicate that the lipoprotein should stay in the inner membrane). The protein is Outer-membrane lipoprotein carrier protein of Cupriavidus taiwanensis (strain DSM 17343 / BCRC 17206 / CCUG 44338 / CIP 107171 / LMG 19424 / R1) (Ralstonia taiwanensis (strain LMG 19424)).